Here is a 783-residue protein sequence, read N- to C-terminus: Rho GTPase-activating protein gacR (783 aa).

Positions 138-188 form a coiled coil; it reads AKNRFDKARLSFDEASEQFKQLRKKQNNINNEKLLEAEEDLDYATQQFSDI. The disordered stretch occupies residues 262 to 299; it reads QFEQTNSSRTISLPPPPPPKPTSSTPSSSPSPSPSSSI. A compositionally biased stretch (low complexity) spans 283 to 299; sequence TSSTPSSSPSPSPSSSI. The Rho-GAP domain occupies 319–509; it reads MALSTITERE…FIISNFNNIF (191 aa). Over residues 527–539 the composition is skewed to gly residues; it reads GSSGGGGGGGSSG. The tract at residues 527–745 is disordered; the sequence is GSSGGGGGGG…TTNSRPLSNS (219 aa). 4 stretches are compositionally biased toward low complexity: residues 568–589, 599–630, 641–651, and 661–698; these read SVNT…ASSA, PSSS…NINP, PKKISSSSNSL, and SIPE…RSST. The segment covering 706–738 has biased composition (polar residues); it reads NRVSMYLQNSNTGVPLPSQKPQRVISNNNTTTN.

It is found in the cytoplasm. Rho GTPase-activating protein involved in the signal transduction pathway. The polypeptide is Rho GTPase-activating protein gacR (gacR) (Dictyostelium discoideum (Social amoeba)).